A 36-amino-acid polypeptide reads, in one-letter code: Phosphoglycerate kinase, chloroplastic (36 aa).

(2R)-3-phosphoglycerate contacts are provided by alanine 22, aspartate 23, and asparagine 25.

Belongs to the phosphoglycerate kinase family. As to quaternary structure, monomer. The cofactor is Mg(2+).

Its subcellular location is the plastid. The protein resides in the chloroplast. It catalyses the reaction (2R)-3-phosphoglycerate + ATP = (2R)-3-phospho-glyceroyl phosphate + ADP. Its pathway is carbohydrate biosynthesis; Calvin cycle. This chain is Phosphoglycerate kinase, chloroplastic, found in Scenedesmus fuscus (Green alga).